We begin with the raw amino-acid sequence, 218 residues long: Large ribosomal subunit protein uL2c (218 aa).

Positions 165-192 (GVVKNPVDHPHGGGEGRSPIGRSHPVTP) are disordered.

This sequence belongs to the universal ribosomal protein uL2 family. In terms of assembly, part of the 50S ribosomal subunit.

The protein localises to the plastid. The protein resides in the chloroplast. The sequence is that of Large ribosomal subunit protein uL2c (rpl2) from Bigelowiella natans (Pedinomonas minutissima).